A 70-amino-acid chain; its full sequence is Beta-defensin 131B (70 aa).

The N-terminal stretch at 1–22 is a signal peptide; it reads MRVLFFVFGVLSLMSTVPPTRS. 3 cysteine pairs are disulfide-bonded: cysteine 29–cysteine 56, cysteine 36–cysteine 50, and cysteine 40–cysteine 57.

The protein belongs to the beta-defensin family.

The protein localises to the secreted. In terms of biological role, has antibacterial activity. The chain is Beta-defensin 131B from Homo sapiens (Human).